The sequence spans 714 residues: Polyribonucleotide nucleotidyltransferase (714 aa).

2 residues coordinate Mg(2+): aspartate 488 and aspartate 494. The KH domain occupies 555–614 (PRIEVMNIPTDKIRDVIGSGGKVIREIVEKTGAKINIEDDGTVKIASSNGKEIEAAKKWI). Residues 624-692 (GEIYEGTVVK…ERGKVRLSMK (69 aa)) enclose the S1 motif domain.

It belongs to the polyribonucleotide nucleotidyltransferase family. It depends on Mg(2+) as a cofactor.

It localises to the cytoplasm. It carries out the reaction RNA(n+1) + phosphate = RNA(n) + a ribonucleoside 5'-diphosphate. Functionally, involved in mRNA degradation. Catalyzes the phosphorolysis of single-stranded polyribonucleotides processively in the 3'- to 5'-direction. This Brucella ovis (strain ATCC 25840 / 63/290 / NCTC 10512) protein is Polyribonucleotide nucleotidyltransferase.